Here is a 324-residue protein sequence, read N- to C-terminus: MLWIMAVLPLVLAGPELNVRMQGTDSIFEGLELKRSVRETDNNCSEGLYQVGPFCCQPCQPGERKVKDCTTSGGAPTCHPCTEGEEYTDRKHYSDKCRRCAFCDEGHGLEVETNCTRTQNTKCRCKENFYCNASLCDHCYHCTSCGLEDILEPCTRTSNTKCKKQSSNYKLLWLLILPGLAILFVFIYKRYRKRQPGDPESGIPSPESVPMNVSDVNLNKYIWRTAEKMKICDAKKFARQHKIPESKIDEIEHNSPQDAAEQKIQLLQCWYQSHGKTGACQALIQGLRKANRCDIAEEIQAMVWEDHENSISNSRNENEGQSLE.

The signal sequence occupies residues 1 to 21; sequence MLWIMAVLPLVLAGPELNVRM. Residues 22–171 are Extracellular-facing; the sequence is QGTDSIFEGL…CKKQSSNYKL (150 aa). N43 carries an N-linked (GlcNAc...) asparagine glycan. TNFR-Cys repeat units follow at residues 43 to 79, 80 to 123, and 124 to 163; these read NCSEGLYQVGPFCCQPCQPGERKVKDCTTSGGAPTCH, PCTE…NTKC, and RCKENFYCNASLCDHCYHCTSCGLEDILEPCTRTSNTKCK. 9 disulfides stabilise this stretch: C44–C55, C56–C69, C59–C78, C81–C97, C100–C115, C103–C123, C125–C139, C142–C154, and C145–C162. 2 N-linked (GlcNAc...) asparagine glycosylation sites follow: N114 and N132. The helical transmembrane segment at 172–188 threads the bilayer; that stretch reads LWLLILPGLAILFVFIY. Topologically, residues 189–324 are cytoplasmic; it reads KRYRKRQPGD…RNENEGQSLE (136 aa). The tract at residues 201–306 is interaction with HIPK3; that stretch reads SGIPSPESVP…EEIQAMVWED (106 aa). S214 is subject to Phosphoserine. Residues 219–243 are interaction with CALM; the sequence is NKYIWRTAEKMKICDAKKFARQHKI. In terms of domain architecture, Death spans 219–303; the sequence is NKYIWRTAEK…DIAEEIQAMV (85 aa).

In terms of assembly, component of the death-induced signaling complex (DISC) composed of cell surface receptor FAS/CD95, adapter protein FADD and the CASP8 protease; recruitment of CASP8 to the complex is required for processing of CASP8 into the p18 and p10 subunits. Interacts directly (via DED domain) with NOL3 (via CARD domain); inhibits death-inducing signaling complex (DISC) assembly by inhibiting the increase in FAS-FADD binding induced by FAS activation. Binds DAXX. Interacts with HIPK3. Part of a complex containing HIPK3 and FADD. Binds RIPK1 and FAIM2. Interacts with BABAM2 and FEM1B. Interacts with CALM. In the absence of stimulation, interacts with BIRC2, DDX3X and GSK3B. The interaction with BIRC2 and DDX3X is further enhanced upon receptor stimulation and accompanied by DDX3X and BIRC2 cleavage. Palmitoylated. Palmitoylation by ZDHHC7 prevents the lysosomal degradation of FAS regulating its expression at the plasma membrane.

It localises to the cell membrane. The protein resides in the membrane raft. Its function is as follows. Receptor for TNFSF6/FASLG. The adapter molecule FADD recruits caspase CASP8 to the activated receptor. The resulting death-inducing signaling complex (DISC) performs CASP8 proteolytic activation which initiates the subsequent cascade of caspases (aspartate-specific cysteine proteases) mediating apoptosis. FAS-mediated apoptosis may have a role in the induction of peripheral tolerance, in the antigen-stimulated suicide of mature T-cells, or both. The sequence is that of Tumor necrosis factor receptor superfamily member 6 (Fas) from Rattus norvegicus (Rat).